A 325-amino-acid polypeptide reads, in one-letter code: Probable siderophore-binding lipoprotein YfiY (325 aa).

The first 20 residues, 1–20 (MKKHISMLFVFLMAVMVLSA), serve as a signal peptide directing secretion. A lipid anchor (N-palmitoyl cysteine) is attached at C21. The S-diacylglycerol cysteine moiety is linked to residue C21. One can recognise a Fe/B12 periplasmic-binding domain in the interval 56–325 (RIVVLTNEGT…DIETYFLKTK (270 aa)). S290 bears the Phosphoserine mark. At T302 the chain carries Phosphothreonine.

It belongs to the bacterial solute-binding protein 8 family. The complex is composed of one ATP-binding protein (YusV), two transmembrane proteins (YfiZ and YfhA) and a solute-binding protein (YfiY). Interacts with FloT.

Its subcellular location is the cell membrane. It is found in the cytoplasm. The protein resides in the membrane raft. Part of the ABC transporter complex YfiYZ/YfhA/YusV involved in import of the iron-hydroxamate siderophores schizokinen, arthrobactin and corprogen. Binds the siderophores and delivers them to the surface of YfiZ/YfhA. The sequence is that of Probable siderophore-binding lipoprotein YfiY (yfiY) from Bacillus subtilis (strain 168).